Here is a 125-residue protein sequence, read N- to C-terminus: NADPH-dependent 7-cyano-7-deazaguanine reductase (125 aa).

Cysteine 41 serves as the catalytic Thioimide intermediate. The Proton donor role is filled by aspartate 48. Substrate is bound by residues 63–65 and 82–83; these read VEL and HE.

Belongs to the GTP cyclohydrolase I family. QueF type 1 subfamily.

The protein resides in the cytoplasm. The catalysed reaction is 7-aminomethyl-7-carbaguanine + 2 NADP(+) = 7-cyano-7-deazaguanine + 2 NADPH + 3 H(+). Its pathway is tRNA modification; tRNA-queuosine biosynthesis. Catalyzes the NADPH-dependent reduction of 7-cyano-7-deazaguanine (preQ0) to 7-aminomethyl-7-deazaguanine (preQ1). This is NADPH-dependent 7-cyano-7-deazaguanine reductase from Sulfurimonas denitrificans (strain ATCC 33889 / DSM 1251) (Thiomicrospira denitrificans (strain ATCC 33889 / DSM 1251)).